The sequence spans 302 residues: S-adenosylmethionine sensor upstream of mTORC1 (302 aa).

S-adenosyl-L-homocysteine-binding residues include R73, G132, and D150. S-adenosyl-L-methionine contacts are provided by R73, G132, D150, L151, D162, F163, and S196. D162, F163, and S196 together coordinate S-adenosyl-L-homocysteine.

Belongs to the BMT2/SAMTOR family.

In terms of biological role, S-adenosyl-L-methionine-binding protein. It is unclear whether this protein acts as a sensor of S-adenosyl-L-methionine to signal methionine sufficiency to mTORC1. Probably acts as a S-adenosyl-L-methionine-dependent methyltransferase. This chain is S-adenosylmethionine sensor upstream of mTORC1, found in Drosophila melanogaster (Fruit fly).